A 214-amino-acid polypeptide reads, in one-letter code: Intermembrane phospholipid transport system binding protein MlaC (214 aa).

Residues 1–28 (MNLIQLKKWFTILTFVLTAFLVTRTAIA) form the signal peptide.

It belongs to the MlaC/ttg2D family.

Its subcellular location is the periplasm. Involved in a phospholipid transport pathway that maintains lipid asymmetry in the outer membrane by retrograde trafficking of phospholipids from the outer membrane to the inner membrane. May transfer phospholipid across the periplasmic space and deliver it to the MlaFEDB complex at the inner membrane. The protein is Intermembrane phospholipid transport system binding protein MlaC of Haemophilus influenzae (strain ATCC 51907 / DSM 11121 / KW20 / Rd).